Here is a 485-residue protein sequence, read N- to C-terminus: Glutamate--tRNA ligase (485 aa).

The 'HIGH' region motif lies at 11 to 21; it reads PSPTGYMHVGN. Residues cysteine 108, cysteine 110, cysteine 135, and aspartate 137 each coordinate Zn(2+). The short motif at 252–256 is the 'KMSKS' region element; sequence KLSKR. An ATP-binding site is contributed by lysine 255.

The protein belongs to the class-I aminoacyl-tRNA synthetase family. Glutamate--tRNA ligase type 1 subfamily. Monomer. Requires Zn(2+) as cofactor.

It is found in the cytoplasm. It catalyses the reaction tRNA(Glu) + L-glutamate + ATP = L-glutamyl-tRNA(Glu) + AMP + diphosphate. Catalyzes the attachment of glutamate to tRNA(Glu) in a two-step reaction: glutamate is first activated by ATP to form Glu-AMP and then transferred to the acceptor end of tRNA(Glu). The chain is Glutamate--tRNA ligase from Clostridium botulinum (strain Loch Maree / Type A3).